We begin with the raw amino-acid sequence, 466 residues long: Paraneoplastic antigen Ma3 homolog (466 aa).

The segment at 379–408 (RPYQGSRRRRHRRRGQHRKGGVPRDDSQGT) is disordered. A compositionally biased stretch (basic residues) spans 384 to 399 (SRRRRHRRRGQHRKGG). The segment at 415–432 (TFCYSCGEDGHIRVHCFN) adopts a CCHC-type zinc-finger fold. Residues 441–466 (QKRQAAMEKGNRSWAWEKSHPKPKTK) form a disordered region. Positions 445–460 (AAMEKGNRSWAWEKSH) are enriched in basic and acidic residues.

This sequence belongs to the PNMA family. In terms of tissue distribution, expressed in the cerebrum and cerebellum.

The protein localises to the nucleus. It is found in the nucleolus. In Mus musculus (Mouse), this protein is Paraneoplastic antigen Ma3 homolog (Pnma3).